A 412-amino-acid chain; its full sequence is Gamma-glutamyl phosphate reductase (412 aa).

Belongs to the gamma-glutamyl phosphate reductase family.

The protein resides in the cytoplasm. It carries out the reaction L-glutamate 5-semialdehyde + phosphate + NADP(+) = L-glutamyl 5-phosphate + NADPH + H(+). It participates in amino-acid biosynthesis; L-proline biosynthesis; L-glutamate 5-semialdehyde from L-glutamate: step 2/2. Catalyzes the NADPH-dependent reduction of L-glutamate 5-phosphate into L-glutamate 5-semialdehyde and phosphate. The product spontaneously undergoes cyclization to form 1-pyrroline-5-carboxylate. The polypeptide is Gamma-glutamyl phosphate reductase (Bartonella bacilliformis (strain ATCC 35685 / KC583 / Herrer 020/F12,63)).